A 502-amino-acid chain; its full sequence is Maturase K (502 aa).

It belongs to the intron maturase 2 family. MatK subfamily.

It localises to the plastid. It is found in the chloroplast. In terms of biological role, usually encoded in the trnK tRNA gene intron. Probably assists in splicing its own and other chloroplast group II introns. The chain is Maturase K from Spiraea cantoniensis (Reeve's meadowsweet).